The primary structure comprises 301 residues: Cell division control protein 2 homolog 1 (301 aa).

The Protein kinase domain occupies 5–297; it reads YQRLEKIGEG…AAQALEHPYF (293 aa). ATP is bound by residues 11 to 19 and Lys34; that span reads IGEGSYGVV. Ser15 carries the post-translational modification Phosphoserine. Position 16 is a phosphotyrosine (Tyr16). Asp127 acts as the Proton acceptor in catalysis. Residue Thr160 is modified to Phosphothreonine; by CAK.

This sequence belongs to the protein kinase superfamily. CMGC Ser/Thr protein kinase family. CDC2/CDKX subfamily. In terms of assembly, forms a stable but non-covalent complex with a regulatory subunit and with a cyclin.

The catalysed reaction is L-seryl-[protein] + ATP = O-phospho-L-seryl-[protein] + ADP + H(+). The enzyme catalyses L-threonyl-[protein] + ATP = O-phospho-L-threonyl-[protein] + ADP + H(+). Its activity is regulated as follows. Phosphorylation at Ser-15 or Tyr-16 inactivates the enzyme, while phosphorylation at Thr-160 activates it. Its function is as follows. Probably involved in the control of the cell cycle. The protein is Cell division control protein 2 homolog 1 (CRK1) of Trypanosoma congolense.